The sequence spans 616 residues: Dihydroxy-acid dehydratase 1 (616 aa).

Residue Asp-81 coordinates Mg(2+). Cys-122 provides a ligand contact to [2Fe-2S] cluster. Residues Asp-123 and Lys-124 each coordinate Mg(2+). Lys-124 carries the post-translational modification N6-carboxylysine. Cys-195 serves as a coordination point for [2Fe-2S] cluster. Glu-491 serves as a coordination point for Mg(2+). The active-site Proton acceptor is the Ser-517.

Belongs to the IlvD/Edd family. Homodimer. It depends on [2Fe-2S] cluster as a cofactor. The cofactor is Mg(2+).

It carries out the reaction (2R)-2,3-dihydroxy-3-methylbutanoate = 3-methyl-2-oxobutanoate + H2O. The enzyme catalyses (2R,3R)-2,3-dihydroxy-3-methylpentanoate = (S)-3-methyl-2-oxopentanoate + H2O. The protein operates within amino-acid biosynthesis; L-isoleucine biosynthesis; L-isoleucine from 2-oxobutanoate: step 3/4. It participates in amino-acid biosynthesis; L-valine biosynthesis; L-valine from pyruvate: step 3/4. Functionally, functions in the biosynthesis of branched-chain amino acids. Catalyzes the dehydration of (2R,3R)-2,3-dihydroxy-3-methylpentanoate (2,3-dihydroxy-3-methylvalerate) into 2-oxo-3-methylpentanoate (2-oxo-3-methylvalerate) and of (2R)-2,3-dihydroxy-3-methylbutanoate (2,3-dihydroxyisovalerate) into 2-oxo-3-methylbutanoate (2-oxoisovalerate), the penultimate precursor to L-isoleucine and L-valine, respectively. This chain is Dihydroxy-acid dehydratase 1, found in Bradyrhizobium diazoefficiens (strain JCM 10833 / BCRC 13528 / IAM 13628 / NBRC 14792 / USDA 110).